Consider the following 1778-residue polypeptide: Internalin I (1778 aa).

The signal sequence occupies residues M1–A28. The segment at D36 to K101 is disordered. Over residues I51 to A62 the composition is skewed to acidic residues. The segment covering E63–E88 has biased composition (basic and acidic residues). 27 LRR repeats span residues A155 to Q179, N183 to V204, N205 to V227, N228 to P250, V251 to G272, E277 to P298, K299 to T321, K322 to S344, E345 to P367, N368 to P389, K390 to P412, Q413 to P434, K435 to P456, R457 to P478, L479 to P500, S501 to P522, S523 to P544, N545 to P566, K567 to P588, S589 to P610, D611 to P632, N633 to D653, K657 to S678, N685 to S707, R708 to T729, N730 to E751, and N752 to V773. The LRRCT domain maps to T785–E872. 3 MucBP domains span residues D1510–V1569, A1575–I1634, and S1644–V1705. The tract at residues S1716–S1742 is disordered. Polar residues predominate over residues K1725–S1742. Residues L1743–G1747 carry the LPXTG sorting signal motif. T1746 carries the pentaglycyl murein peptidoglycan amidated threonine modification. A propeptide spans G1747–Q1778 (removed by sortase).

This sequence belongs to the internalin family.

Its subcellular location is the secreted. The protein resides in the cell wall. Functionally, a role in virulence could not be demonstrated. The protein is Internalin I (inlI) of Listeria monocytogenes serovar 1/2a (strain ATCC BAA-679 / EGD-e).